Reading from the N-terminus, the 194-residue chain is UPF0301 protein BPEN_258 (194 aa).

This sequence belongs to the UPF0301 (AlgH) family.

This is UPF0301 protein BPEN_258 from Blochmanniella pennsylvanica (strain BPEN).